We begin with the raw amino-acid sequence, 100 residues long: Small ribosomal subunit protein uS14c (100 aa).

The protein belongs to the universal ribosomal protein uS14 family. Part of the 30S ribosomal subunit.

Its subcellular location is the plastid. The protein localises to the chloroplast. Its function is as follows. Binds 16S rRNA, required for the assembly of 30S particles. The protein is Small ribosomal subunit protein uS14c of Pleurastrum terricola (Filamentous green alga).